A 376-amino-acid polypeptide reads, in one-letter code: Chaperone protein DnaJ (376 aa).

One can recognise a J domain in the interval 5 to 70 (DYYEVLGAAK…QKRAAYDQFG (66 aa)). The CR-type zinc-finger motif lies at 134 to 212 (GCDEKIRIPT…CGGQGRVQNT (79 aa)). Residues cysteine 147, cysteine 150, cysteine 164, cysteine 167, cysteine 186, cysteine 189, cysteine 200, and cysteine 203 each coordinate Zn(2+). CXXCXGXG motif repeat units follow at residues 147 to 154 (CDVCHGSG), 164 to 171 (CTTCGGVG), 186 to 193 (CPTCKGEG), and 200 to 207 (CGNCGGQG).

The protein belongs to the DnaJ family. As to quaternary structure, homodimer. The cofactor is Zn(2+).

Its subcellular location is the cytoplasm. Its function is as follows. Participates actively in the response to hyperosmotic and heat shock by preventing the aggregation of stress-denatured proteins and by disaggregating proteins, also in an autonomous, DnaK-independent fashion. Unfolded proteins bind initially to DnaJ; upon interaction with the DnaJ-bound protein, DnaK hydrolyzes its bound ATP, resulting in the formation of a stable complex. GrpE releases ADP from DnaK; ATP binding to DnaK triggers the release of the substrate protein, thus completing the reaction cycle. Several rounds of ATP-dependent interactions between DnaJ, DnaK and GrpE are required for fully efficient folding. Also involved, together with DnaK and GrpE, in the DNA replication of plasmids through activation of initiation proteins. This chain is Chaperone protein DnaJ, found in Alcanivorax borkumensis (strain ATCC 700651 / DSM 11573 / NCIMB 13689 / SK2).